Reading from the N-terminus, the 430-residue chain is Glutamate-1-semialdehyde 2,1-aminomutase (430 aa).

Residue Lys268 is modified to N6-(pyridoxal phosphate)lysine.

It belongs to the class-III pyridoxal-phosphate-dependent aminotransferase family. HemL subfamily. It depends on pyridoxal 5'-phosphate as a cofactor.

The protein resides in the cytoplasm. The enzyme catalyses (S)-4-amino-5-oxopentanoate = 5-aminolevulinate. Its pathway is porphyrin-containing compound metabolism; protoporphyrin-IX biosynthesis; 5-aminolevulinate from L-glutamyl-tRNA(Glu): step 2/2. This chain is Glutamate-1-semialdehyde 2,1-aminomutase, found in Methanopyrus kandleri (strain AV19 / DSM 6324 / JCM 9639 / NBRC 100938).